A 367-amino-acid polypeptide reads, in one-letter code: Probable cysteine protease RD19D (367 aa).

Residues 1–22 (MVAKALAQLITCIILFCHVVAS) form the signal peptide. Residues 23–136 (VEDLTIRQVT…AEAPMVEVDG (114 aa)) constitute a propeptide, activation peptide. The N-linked (GlcNAc...) asparagine glycan is linked to N61. 2 disulfides stabilise this stretch: C158/C208 and C192/C241. C161 is an active-site residue. N-linked (GlcNAc...) asparagine glycosylation is present at N254. C297 and C352 form a disulfide bridge. Residues H304 and N331 contribute to the active site.

The protein belongs to the peptidase C1 family.

Functionally, probable thiol protease. The polypeptide is Probable cysteine protease RD19D (Arabidopsis thaliana (Mouse-ear cress)).